The following is a 143-amino-acid chain: Large ribosomal subunit protein uL15 (143 aa).

The tract at residues 1–52 (MKLNTLAPAAGSKSAPKRLGRGIGSGLGKTSGKGHKGQKARSGGYHKVGFEG) is disordered. Positions 21-31 (RGIGSGLGKTS) are enriched in gly residues.

It belongs to the universal ribosomal protein uL15 family. As to quaternary structure, part of the 50S ribosomal subunit.

Its function is as follows. Binds to the 23S rRNA. The polypeptide is Large ribosomal subunit protein uL15 (Francisella tularensis subsp. mediasiatica (strain FSC147)).